Consider the following 431-residue polypeptide: uncharacterized protein (431 aa).

A run of 12 helical transmembrane segments spans residues 33–53, 63–83, 111–131, 143–163, 175–195, 197–217, 241–261, 273–293, 318–338, 358–378, 381–401, and 407–427; these read VARV…VIYL, FSVF…ANGL, VSGM…PLWS, VALL…LGML, LMVA…VIGW, LVGF…MLMT, AHSI…PVLL, GVVI…LTAM, LIGG…PWIM, AAAV…AAAL, AYSL…LLPL, and TVVA…VALA.

This sequence to M.tuberculosis Rv1510 and M.bovis Mb3654.

It localises to the cell membrane. This is an uncharacterized protein from Mycobacterium tuberculosis (strain ATCC 25618 / H37Rv).